We begin with the raw amino-acid sequence, 292 residues long: Homoserine kinase (292 aa).

Position 84 to 94 (84 to 94 (PFSRGLGSSSA)) interacts with ATP.

It belongs to the GHMP kinase family. Homoserine kinase subfamily.

The protein localises to the cytoplasm. It catalyses the reaction L-homoserine + ATP = O-phospho-L-homoserine + ADP + H(+). It participates in amino-acid biosynthesis; L-threonine biosynthesis; L-threonine from L-aspartate: step 4/5. Catalyzes the ATP-dependent phosphorylation of L-homoserine to L-homoserine phosphate. The protein is Homoserine kinase of Campylobacter hominis (strain ATCC BAA-381 / DSM 21671 / CCUG 45161 / LMG 19568 / NCTC 13146 / CH001A).